Reading from the N-terminus, the 360-residue chain is Probable dual-specificity RNA methyltransferase RlmN (360 aa).

Residue Glu103 is the Proton acceptor of the active site. Positions 109–342 (HEYGNSVCVT…VTIRREQGHD (234 aa)) constitute a Radical SAM core domain. Cysteines 116 and 347 form a disulfide. [4Fe-4S] cluster is bound by residues Cys123, Cys127, and Cys130. S-adenosyl-L-methionine contacts are provided by residues 173-174 (GE), Ser205, 228-230 (SLH), and Asn304. Cys347 serves as the catalytic S-methylcysteine intermediate.

The protein belongs to the radical SAM superfamily. RlmN family. It depends on [4Fe-4S] cluster as a cofactor.

It is found in the cytoplasm. The catalysed reaction is adenosine(2503) in 23S rRNA + 2 reduced [2Fe-2S]-[ferredoxin] + 2 S-adenosyl-L-methionine = 2-methyladenosine(2503) in 23S rRNA + 5'-deoxyadenosine + L-methionine + 2 oxidized [2Fe-2S]-[ferredoxin] + S-adenosyl-L-homocysteine. It carries out the reaction adenosine(37) in tRNA + 2 reduced [2Fe-2S]-[ferredoxin] + 2 S-adenosyl-L-methionine = 2-methyladenosine(37) in tRNA + 5'-deoxyadenosine + L-methionine + 2 oxidized [2Fe-2S]-[ferredoxin] + S-adenosyl-L-homocysteine. Specifically methylates position 2 of adenine 2503 in 23S rRNA and position 2 of adenine 37 in tRNAs. The sequence is that of Probable dual-specificity RNA methyltransferase RlmN from Bacillus pumilus (strain SAFR-032).